The following is a 609-amino-acid chain: Glutamine--fructose-6-phosphate aminotransferase [isomerizing] (609 aa).

The active-site Nucleophile; for GATase activity is the C2. Residues 2-219 (CGIFGYIGAK…SGELAVVGLG (218 aa)) enclose the Glutamine amidotransferase type-2 domain. SIS domains are found at residues 280 to 426 (ISEK…LKQT) and 458 to 599 (WAND…IDRP). The active-site For Fru-6P isomerization activity is K604.

As to quaternary structure, homodimer.

It is found in the cytoplasm. The catalysed reaction is D-fructose 6-phosphate + L-glutamine = D-glucosamine 6-phosphate + L-glutamate. Catalyzes the first step in hexosamine metabolism, converting fructose-6P into glucosamine-6P using glutamine as a nitrogen source. The sequence is that of Glutamine--fructose-6-phosphate aminotransferase [isomerizing] from Chlamydia caviae (strain ATCC VR-813 / DSM 19441 / 03DC25 / GPIC) (Chlamydophila caviae).